The sequence spans 355 residues: Chorismate synthase (355 aa).

Arg-46 lines the NADP(+) pocket. Residues 123–125, 233–234, Gly-273, 288–292, and Arg-314 each bind FMN; these read RAS, NG, and KPTPS.

Belongs to the chorismate synthase family. In terms of assembly, homotetramer. FMNH2 is required as a cofactor.

The catalysed reaction is 5-O-(1-carboxyvinyl)-3-phosphoshikimate = chorismate + phosphate. Its pathway is metabolic intermediate biosynthesis; chorismate biosynthesis; chorismate from D-erythrose 4-phosphate and phosphoenolpyruvate: step 7/7. Catalyzes the anti-1,4-elimination of the C-3 phosphate and the C-6 proR hydrogen from 5-enolpyruvylshikimate-3-phosphate (EPSP) to yield chorismate, which is the branch point compound that serves as the starting substrate for the three terminal pathways of aromatic amino acid biosynthesis. This reaction introduces a second double bond into the aromatic ring system. This Campylobacter concisus (strain 13826) protein is Chorismate synthase.